The sequence spans 478 residues: Calcium/calmodulin-dependent protein kinase type II subunit alpha (478 aa).

Y13 carries the post-translational modification Phosphotyrosine. In terms of domain architecture, Protein kinase spans 13–271; sequence YQLFEELGKG…AAEALKHPWI (259 aa). ATP-binding positions include 19 to 27 and K42; that span reads LGKGAFSVV. The Proton acceptor role is filled by D135. Phosphoserine is present on S257. T286 bears the Phosphothreonine; by autocatalysis mark. Residues 290-300 form a calmodulin-binding region; sequence LKKFNARRKLK. The tract at residues 310–320 is interaction with BAALC; sequence TRNFSGGKSGG. Residues 314–341 form a disordered region; sequence SGGKSGGNKKNDGVKESSESTNTTIEDE. Residues 322 to 331 show a composition bias toward basic and acidic residues; sequence KKNDGVKESS. 3 positions are modified to phosphoserine: S330, S331, and S333. Phosphothreonine occurs at positions 336 and 337. Residue S404 is modified to Phosphoserine.

Belongs to the protein kinase superfamily. CAMK Ser/Thr protein kinase family. CaMK subfamily. As to quaternary structure, there are 4 genes encoding calcium/calmodulin-dependent protein kinase type II chains: CAMK2A, CAMK2B, CAMK2G and CAMK2D. The corresponding proteins assemble into homo- or heteromultimeric holoenzymes composed of 12 subunits with two hexameric rings stacked one on top of the other. Interacts with BAALC. Interacts with MPDZ. Interacts with SYN1. Interacts with CAMK2N2. Interacts with SYNGAP1. Interacts with SYNPO2. Interacts with SHANK3. Interacts with GRIN2B. Interacts with CACNB2. Interacts with LRRC7. Interacts with GRM5. Interacts with DAGLA (via C-terminal); this interaction is enhanced by autophosphorylation of CAMK2A at Thr-286. Interacts with CAMK2N1; this interaction requires CAMK2A activation by Ca(2+). Requires Mg(2+) as cofactor. Post-translationally, autophosphorylation of Thr-286 following activation by Ca(2+)/calmodulin. Phosphorylation of Thr-286 locks the kinase into an activated state. In terms of processing, palmitoylated. Probably palmitoylated by ZDHHC3 and ZDHHC7. In terms of tissue distribution, expressed in brain. As to expression, expressed in skeletal muscle.

It localises to the cytoplasm. The protein resides in the synapse. The protein localises to the postsynaptic density. Its subcellular location is the cell projection. It is found in the dendritic spine. It localises to the dendrite. It carries out the reaction L-seryl-[protein] + ATP = O-phospho-L-seryl-[protein] + ADP + H(+). The catalysed reaction is L-threonyl-[protein] + ATP = O-phospho-L-threonyl-[protein] + ADP + H(+). Activated by Ca(2+)/calmodulin. Binding of calmodulin results in conformational change that relieves intrasteric autoinhibition and allows autophosphorylation of Thr-286 which turns the kinase in a constitutively active form and confers to the kinase a Ca(2+)-independent activity. Calcium/calmodulin-dependent protein kinase that functions autonomously after Ca(2+)/calmodulin-binding and autophosphorylation, and is involved in various processes, such as synaptic plasticity, neurotransmitter release and long-term potentiation. Member of the NMDAR signaling complex in excitatory synapses, it regulates NMDAR-dependent potentiation of the AMPAR and therefore excitatory synaptic transmission. Regulates dendritic spine development. Also regulates the migration of developing neurons. Phosphorylates the transcription factor FOXO3 to activate its transcriptional activity. Phosphorylates the transcription factor ETS1 in response to calcium signaling, thereby decreasing ETS1 affinity for DNA. In response to interferon-gamma (IFN-gamma) stimulation, catalyzes phosphorylation of STAT1, stimulating the JAK-STAT signaling pathway. In response to interferon-beta (IFN-beta) stimulation, stimulates the JAK-STAT signaling pathway. Acts as a negative regulator of 2-arachidonoylglycerol (2-AG)-mediated synaptic signaling via modulation of DAGLA activity. Its function is as follows. Has no kinase activity. The sequence is that of Calcium/calmodulin-dependent protein kinase type II subunit alpha (Camk2a) from Mus musculus (Mouse).